Here is a 234-residue protein sequence, read N- to C-terminus: Large ribosomal subunit protein uL1 (234 aa).

It belongs to the universal ribosomal protein uL1 family. Part of the 50S ribosomal subunit.

Functionally, binds directly to 23S rRNA. The L1 stalk is quite mobile in the ribosome, and is involved in E site tRNA release. Protein L1 is also a translational repressor protein, it controls the translation of the L11 operon by binding to its mRNA. This chain is Large ribosomal subunit protein uL1, found in Salmonella gallinarum (strain 287/91 / NCTC 13346).